Reading from the N-terminus, the 799-residue chain is Oligopeptide transporter 1 (799 aa).

Disordered stretches follow at residues 1 to 26 (MSTI…PIQI) and 43 to 64 (DVNN…QKFD). Residues 1–108 (MSTIYRESDS…DPTIRLNHWR (108 aa)) lie on the Extracellular side of the membrane. The span at 13-26 (SEPSPTPTTIPIQI) shows a compositional bias: low complexity. N-linked (GlcNAc...) asparagine glycosylation occurs at Asn46. Thr48, Thr50, and Thr51 each carry phosphothreonine. The helical transmembrane segment at 109-129 (TWFLTTVFVVVFAGVNQFFSL) threads the bilayer. Topologically, residues 130–135 (RYPSLE) are cytoplasmic. A helical transmembrane segment spans residues 136 to 156 (INFLVAQVVCYPIGRILALLP). Over 157-177 (DWKCSKVPFFDLNPGPFTKKE) the chain is Extracellular. The chain crosses the membrane as a helical span at residues 178–198 (HAVVTIAVALTSSTAYAMYIL). The Cytoplasmic segment spans residues 199–210 (NAQGSFYNMKLN). A helical membrane pass occupies residues 211–231 (VGYQFLLVWTSQMIGYGAAGL). The Extracellular segment spans residues 232–276 (TRRWVVNPASSIWPQTLISVSLFDSLHSRKVEKTVANGWTMPRYR). Residues 277 to 297 (FFLIVLIGSFIWYWVPGFLFT) form a helical membrane-spanning segment. The Cytoplasmic segment spans residues 298–313 (GLSYFNVILWGSKTRH). Residues 314–334 (NFIANTIFGTQSGLGALPITF) traverse the membrane as a helical segment. Topologically, residues 335–359 (DYTQVSQAMSGSVFATPFYVSANTY) are extracellular. The chain crosses the membrane as a helical span at residues 360-380 (ASVLIFFVIVLPCLYFTNTWY). Topologically, residues 381 to 428 (AKYMPVISGSTYDNTQNKYNVTKILNEDYSINLEKYKEYSPVFVPFSY) are cytoplasmic. The chain crosses the membrane as a helical span at residues 429-449 (LLSYALNFAAVIAVFVHCILY). Topologically, residues 450 to 482 (HGKDIVAKFKDRKNGGTDIHMRIYSKNYKDCPD) are extracellular. Residues 483-503 (WWYLLLQIVMIGLGFVAVCCF) form a helical membrane-spanning segment. Topologically, residues 504–508 (DTKFP) are cytoplasmic. The helical transmembrane segment at 509 to 529 (AWAFVIAILISLVNFIPQGIL) threads the bilayer. The Extracellular portion of the chain corresponds to 530–540 (EAMTNQHVGLN). A helical membrane pass occupies residues 541–561 (IITELICGYMLPLRPMANLLF). Over 562-590 (KLYGFIVMRQGLNLSRDLKLAMYMKVSPR) the chain is Cytoplasmic. The helical transmembrane segment at 591-611 (LIFAVQIYATIISGMVNVGVQ) threads the bilayer. Over 612 to 659 (EWMMHNIDGLCTTDQPNGFTCANGRTVFNASIIWSLPKYLFSSGRIYN) the chain is Extracellular. Asn640 carries an N-linked (GlcNAc...) asparagine glycan. A helical transmembrane segment spans residues 660–680 (PLMWFFLIGLLFPLAVYAVQW). Residues 681–736 (KFPKFKFAKHIHTPVFFTGPGNIPPSTPYNYSLFFAMSFCLNLIRKRWRAWFNKYN) lie on the Cytoplasmic side of the membrane. The chain crosses the membrane as a helical span at residues 737-757 (FVMGAGVEAGVAISVVIIFLC). The Extracellular segment spans residues 758–799 (VQYPGGKLSWWGNNVWKRTYDNDYKKFYTLKKGETFGYDKWW).

It belongs to the oligopeptide OPT transporter family.

The protein resides in the cell membrane. In terms of biological role, high affinity transporter for glutathione. Also transports tetra- and pentapeptides like the opioids leucine enkephalin (Tyr-Gly-Gly-Phe-Leu) and methionine enkephalin (Tyr-Gly-Gly_Phe-Met) across the cell membrane. The chain is Oligopeptide transporter 1 (OPT1) from Saccharomyces cerevisiae (strain ATCC 204508 / S288c) (Baker's yeast).